Consider the following 419-residue polypeptide: Putative zinc metalloprotease SP_0263 (419 aa).

Histidine 18 serves as a coordination point for Zn(2+). The active site involves glutamate 19. Residue histidine 22 participates in Zn(2+) binding. A run of 3 helical transmembrane segments spans residues 169 to 191 (LITNFAGPMNNFILGVVVFWVLI), 345 to 367 (ILYFLAMISINIGIFNLIPIPAL), and 388 to 410 (EIETYVTLAGVVIMVVLMIAVTW).

Belongs to the peptidase M50B family. Zn(2+) is required as a cofactor.

It localises to the cell membrane. The sequence is that of Putative zinc metalloprotease SP_0263 from Streptococcus pneumoniae serotype 4 (strain ATCC BAA-334 / TIGR4).